A 132-amino-acid chain; its full sequence is Intraflagellar transport protein 20 homolog A (132 aa).

A coiled-coil region spans residues 87–112 (EAQQQQLYALIAEKKMQLERYRIEYD).

It localises to the golgi apparatus. The protein resides in the cis-Golgi network. It is found in the cytoplasm. Its subcellular location is the cytoskeleton. The protein localises to the microtubule organizing center. It localises to the centrosome. The protein resides in the centriole. It is found in the cell projection. Its subcellular location is the cilium. Its function is as follows. Involved in ciliary process assembly. May play a role in the trafficking of ciliary membrane proteins from the Golgi complex to the cilium. Regulates the platelet-derived growth factor receptor-alpha (PDGFRA) signaling pathway. Plays an important role in spermatogenesis, particularly spermiogenesis, when germ cells form flagella. The chain is Intraflagellar transport protein 20 homolog A (ift20-a) from Xenopus laevis (African clawed frog).